We begin with the raw amino-acid sequence, 98 residues long: Acylphosphatase (98 aa).

Residues 12–98 (TYYVRVRGVV…DKRFERFQQH (87 aa)) enclose the Acylphosphatase-like domain. Residues arginine 27 and asparagine 45 contribute to the active site.

The protein belongs to the acylphosphatase family.

It carries out the reaction an acyl phosphate + H2O = a carboxylate + phosphate + H(+). The polypeptide is Acylphosphatase (acyP) (Burkholderia thailandensis (strain ATCC 700388 / DSM 13276 / CCUG 48851 / CIP 106301 / E264)).